The sequence spans 355 residues: BAG family molecular chaperone regulator 1 (355 aa).

A disordered region spans residues 1-112; sequence MAGRSAARRP…KNVTGTQVEE (112 aa). A compositionally biased stretch (basic and acidic residues) spans 26–39; that stretch reads PAREPRQSESRAER. Polar residues-rich tracts occupy residues 80–91 and 102–111; these read SSQSEKVGSSSR and SKNVTGTQVE. A run of 7 repeats spans residues 103–108, 111–116, 117–122, 123–128, 129–134, 141–146, and 147–152. Residues 111–209 are 7 X 6 AA tandem repeat of E-E-X(4); that stretch reads EEVTKIEEAT…LIFKGKSLKE (99 aa). Residues 132-151 form a disordered region; it reads TQTDNMAKTEEMVQTEEMET. In terms of domain architecture, Ubiquitin-like spans 154-234; it reads LSVIVTHSNE…VMLIGEKSNP (81 aa). The segment at 182–229 is interaction with HSPA8; that stretch reads DLAQLVEEATGVPLPFQKLIFKGKSLKEMETPLSALGMQNGCRVMLIG. The tract at residues 226–355 is interaction with PPP1R15A; the sequence is MLIGEKSNPE…LQSTNLALAE (130 aa). The region spanning 256–336 is the BAG domain; the sequence is HLQELNKELS…VFLAECDTVE (81 aa).

In terms of assembly, homodimer. Forms a heteromeric complex with HSP70/HSC70. Binds to the ATPase domain of HSP/HSC70 chaperones. Interacts with NR3C1. Interacts with the N-terminal region of MAPRE2. Interacts with PPP1R15A. Interacts with BCL2 in an ATP-dependent manner. Interacts with SIAH1, HSPA8 (via NBD), HSPA1A (via NBD) and HSPA1B (via NBD). Interacts with SIAH2. Interacts with ESR1; the interaction is promoted in the absence of estradiol (17-beta-estradiol/E2). Ubiquitinated; mediated by SIAH1 or SIAH2 and leading to its subsequent proteasomal degradation. As to expression, isoform 2 is expressed in the heart, lung, kidney and spinal cord. Isoform 1 and isoform 2 are expressed in hematopoietic cell lines. The levels of isoform 2 are relatively constant in all the cell lines examined while the levels of isoform 1 are more variable (at protein level). Isoform 1 is expressed in the lung and kidney. Isoform 2 is expressed in various tissues, with highest levels in testis and stomach.

It localises to the nucleus. Its subcellular location is the cytoplasm. Co-chaperone for HSP70 and HSC70 chaperone proteins. Acts as a nucleotide-exchange factor (NEF) promoting the release of ADP from the HSP70 and HSC70 proteins thereby triggering client/substrate protein release. Nucleotide release is mediated via its binding to the nucleotide-binding domain (NBD) of HSPA8/HSC70 where as the substrate release is mediated via its binding to the substrate-binding domain (SBD) of HSPA8/HSC70. Inhibits the pro-apoptotic function of PPP1R15A, and has anti-apoptotic activity. Markedly increases the anti-cell death function of BCL2 induced by various stimuli. Involved in the STUB1-mediated proteasomal degradation of ESR1 in response to age-related circulating estradiol (17-beta-estradiol/E2) decline, thereby promotes neuronal apoptosis in response to ischemic reperfusion injury. This is BAG family molecular chaperone regulator 1 (Bag1) from Mus musculus (Mouse).